The following is a 604-amino-acid chain: Prostaglandin G/H synthase 2 (604 aa).

An N-terminal signal peptide occupies residues 1-17 (MLARALLLCAALALGQA). The region spanning 18–55 (ANPCCSNPCQNRGECLSVGFDRYKCDCTRTGYYGENCT) is the EGF-like domain. 4 disulfide bridges follow: Cys-21–Cys-32, Cys-22–Cys-145, Cys-26–Cys-42, and Cys-44–Cys-54. Residue Asn-53 is glycosylated (N-linked (GlcNAc...) asparagine). A substrate-binding site is contributed by Arg-106. Asn-130 carries N-linked (GlcNAc...) asparagine glycosylation. His-193 serves as the catalytic Proton acceptor. Substrate is bound at residue Tyr-341. The active-site For cyclooxygenase activity is Tyr-371. His-374 provides a ligand contact to heme b. A glycan (N-linked (GlcNAc...) asparagine) is linked at Asn-396. The residue at position 526 (Cys-526) is an S-nitrosocysteine. The cysteines at positions 555 and 561 are disulfide-linked. N-linked (GlcNAc...) asparagine glycosylation is present at Asn-580.

This sequence belongs to the prostaglandin G/H synthase family. In terms of assembly, homodimer. Requires heme b as cofactor. S-nitrosylation by NOS2 (iNOS) activates enzyme activity. S-nitrosylation may take place on different Cys residues in addition to Cys-526.

It is found in the microsome membrane. It localises to the endoplasmic reticulum membrane. The protein resides in the nucleus inner membrane. The protein localises to the nucleus outer membrane. It catalyses the reaction (5Z,8Z,11Z,14Z)-eicosatetraenoate + AH2 + 2 O2 = prostaglandin H2 + A + H2O. The enzyme catalyses (5Z,8Z,11Z,14Z)-eicosatetraenoate + 2 O2 = prostaglandin G2. It carries out the reaction prostaglandin G2 + AH2 = prostaglandin H2 + A + H2O. The catalysed reaction is (5Z,8Z,11Z,14Z,17Z)-eicosapentaenoate + 2 O2 = prostaglandin G3. It catalyses the reaction prostaglandin G3 + AH2 = prostaglandin H3 + A + H2O. The enzyme catalyses (8Z,11Z,14Z)-eicosatrienoate + 2 O2 = prostaglandin G1. It carries out the reaction prostaglandin G1 + AH2 = prostaglandin H1 + A + H2O. The catalysed reaction is 2-(5Z,8Z,11Z,14Z)-eicosatetraenoyl-sn-glycero-3-phosphoethanolamine + 2 O2 = 2-(prostaglandin G2)-sn-glycero-3-phosphoethanolamine. It catalyses the reaction 2-(prostaglandin G2)-sn-glycero-3-phosphoethanolamine + AH2 = 2-(prostaglandin H2)-sn-glycero-3-phosphoethanolamine + A + H2O. The enzyme catalyses 2-(5Z,8Z,11Z,14Z)-eicosatetraenoyl-sn-glycero-3-phosphocholine + 2 O2 = 2-(prostaglandin G2)-sn-glycero-3-phosphocholine. It carries out the reaction 2-(prostaglandin G2)-sn-glycero-3-phosphocholine + AH2 = 2-(prostaglandin H2)-sn-glycero-3-phosphocholine + A + H2O. The catalysed reaction is (15S)-hydroperoxy-(5Z,8Z,11Z,13E)-eicosatetraenoate + AH2 = (15S)-hydroxy-(5Z,8Z,11Z,13E)-eicosatetraenoate + A + H2O. It catalyses the reaction 2-(5Z,8Z,11Z,14Z)-eicosatetraenoyl-sn-glycero-3-phosphocholine + AH2 + O2 = 2-[(15S)-hydroxy-(5Z,8Z,11Z,13E)-eicosatetraenoyl]-sn-glycero-3-phosphocholine + A + H2O. The enzyme catalyses 2-(5Z,8Z,11Z,14Z)-eicosatetraenoyl-sn-glycero-3-phosphocholine + AH2 + O2 = 2-[(15R)-hydroxy-(5Z,8Z,11Z,13E)-eicosatetraenoyl]-sn-glycero-3-phosphocholine + A + H2O. It carries out the reaction 2-(5Z,8Z,11Z,14Z)-eicosatetraenoyl-sn-glycero-3-phosphocholine + AH2 + O2 = 2-[(11R)-hydroxy-(5Z,8Z,12E,14Z)-eicosatetraenoyl]-sn-glycero-3-phosphocholine + A + H2O. The catalysed reaction is (9Z,12Z)-octadecadienoate + AH2 + O2 = 9-hydroxy-(10E,12Z)-octadecadienoate + A + H2O. It catalyses the reaction (9Z,12Z)-octadecadienoate + AH2 + O2 = 13-hydroxy-(9Z,11E)-octadecadienoate + A + H2O. The enzyme catalyses (5Z,8Z,11Z,14Z)-eicosatetraenoate + AH2 + O2 = (15R)-hydroxy-(5Z,8Z,11Z,13E)-eicosatetraenoate + A + H2O. It carries out the reaction (5Z,8Z,11Z,14Z)-eicosatetraenoate + AH2 + O2 = (11R)-hydroxy-(5Z,8Z,12E,14Z)-eicosatetraenoate + A + H2O. The catalysed reaction is (5Z,8Z,11Z,14Z,17Z)-eicosapentaenoate + AH2 + O2 = (11R)-hydroxy-(5Z,8Z,12E,14Z,17Z)-eicosapentaenoate + A + H2O. It catalyses the reaction (5Z,8Z,11Z,14Z,17Z)-eicosapentaenoate + AH2 + O2 = (18S)-hydroxy-(5Z,8Z,11Z,14Z,16E)-eicosapentaenoate + A + H2O. The enzyme catalyses (5Z,8Z,11Z,14Z,17Z)-eicosapentaenoate + AH2 + O2 = (18R)-hydroxy-(5Z,8Z,11Z,14Z,16E)-eicosapentaenoate + A + H2O. It carries out the reaction (5Z,8Z,11Z,14Z,17Z)-eicosapentaenoate + AH2 + O2 = (15R)-hydroxy-(5Z,8Z,11Z,13E,17Z)-eicosapentaenoate + A + H2O. The catalysed reaction is (5Z,8Z,11Z,14Z,17Z)-eicosapentaenoate + AH2 + O2 = (15S)-hydroxy-(5Z,8Z,11Z,13E,17Z)-eicosapentaenoate + A + H2O. It catalyses the reaction (7Z,10Z,13Z,16Z,19Z)-docosapentaenoate + AH2 + O2 = 13R-hydroxy-(7Z,10Z,14E,16Z,19Z)-docosapentaenoate + A + H2O. The enzyme catalyses (4Z,7Z,10Z,13Z,16Z,19Z)-docosahexaenoate + AH2 + O2 = 13-hydroxy-(4Z,7Z,10Z,14E,16Z,19Z)-docosahexaenoate + A + H2O. It carries out the reaction (5S)-hydroxy-(6E,8Z,11Z,14Z)-eicosatetraenoate + AH2 + O2 = (5S,15R)-dihydroxy-(6E,8Z,11Z,13E)-eicosatetraenoate + A + H2O. The catalysed reaction is (4Z,7Z,10Z,13Z,16Z,19Z)-docosahexaenoate + AH2 + O2 = 17R-hydroxy-(4Z,7Z,10Z,13Z,15E,19Z)-docosahexaenoate + A + H2O. It catalyses the reaction (5S)-hydroxy-(6E,8Z,11Z,14Z)-eicosatetraenoate + AH2 + O2 = (5S,15S)-dihydroxy-(6E,8Z,11Z,13E)-eicosatetraenoate + A + H2O. The enzyme catalyses (5S)-hydroxy-(6E,8Z,11Z,14Z)-eicosatetraenoate + AH2 + O2 = (5S,11R)-dihydroxy-(6E,8Z,12E,14Z)-eicosatetraenoate + A + H2O. It carries out the reaction 2-(5Z,8Z,11Z,14Z-eicosatetraenoyl)-glycerol + 2 O2 = 2-glyceryl-prostaglandin G2. The catalysed reaction is 2-glyceryl-prostaglandin G2 + AH2 = 2-glyceryl-prostaglandin H2 + A + H2O. It catalyses the reaction (5Z,8Z,11Z,14Z)-eicosatetraenoate + O2 = (15R)-hydroperoxy-(5Z,8Z,11Z,13E)-eicosatetraenoate. The enzyme catalyses (5Z,8Z,11Z,14Z)-eicosatetraenoate + O2 = 11R-hydroperoxy-(5Z,8Z,12E,14Z)-eicosatetraenoate. It carries out the reaction (9Z,12Z)-octadecadienoate + AH2 + O2 = (9R)-hydroxy-(10E,12Z)-octadecadienoate + A + H2O. The catalysed reaction is (9Z,12Z)-octadecadienoate + AH2 + O2 = (9S)-hydroxy-(10E,12Z)-octadecadienoate + A + H2O. It catalyses the reaction (9Z,12Z)-octadecadienoate + AH2 + O2 = (13S)-hydroxy-(9Z,11E)-octadecadienoate + A + H2O. The enzyme catalyses (9Z,12Z)-octadecadienoate + AH2 + O2 = (13R)-hydroxy-(9Z,11E)-octadecadienoate + A + H2O. Its pathway is lipid metabolism; prostaglandin biosynthesis. Functionally, dual cyclooxygenase and peroxidase in the biosynthesis pathway of prostanoids, a class of C20 oxylipins mainly derived from arachidonate ((5Z,8Z,11Z,14Z)-eicosatetraenoate, AA, C20:4(n-6)), with a particular role in the inflammatory response. The cyclooxygenase activity oxygenates AA to the hydroperoxy endoperoxide prostaglandin G2 (PGG2), and the peroxidase activity reduces PGG2 to the hydroxy endoperoxide prostaglandin H2 (PGH2), the precursor of all 2-series prostaglandins and thromboxanes. This complex transformation is initiated by abstraction of hydrogen at carbon 13 (with S-stereochemistry), followed by insertion of molecular O2 to form the endoperoxide bridge between carbon 9 and 11 that defines prostaglandins. The insertion of a second molecule of O2 (bis-oxygenase activity) yields a hydroperoxy group in PGG2 that is then reduced to PGH2 by two electrons. Similarly catalyzes successive cyclooxygenation and peroxidation of dihomo-gamma-linoleate (DGLA, C20:3(n-6)) and eicosapentaenoate (EPA, C20:5(n-3)) to corresponding PGH1 and PGH3, the precursors of 1- and 3-series prostaglandins. In an alternative pathway of prostanoid biosynthesis, converts 2-arachidonoyl lysophopholipids to prostanoid lysophopholipids, which are then hydrolyzed by intracellular phospholipases to release free prostanoids. Metabolizes 2-arachidonoyl glycerol yielding the glyceryl ester of PGH2, a process that can contribute to pain response. Generates lipid mediators from n-3 and n-6 polyunsaturated fatty acids (PUFAs) via a lipoxygenase-type mechanism. Oxygenates PUFAs to hydroperoxy compounds and then reduces them to corresponding alcohols. Plays a role in the generation of resolution phase interaction products (resolvins) during both sterile and infectious inflammation. Metabolizes docosahexaenoate (DHA, C22:6(n-3)) to 17R-HDHA, a precursor of the D-series resolvins (RvDs). As a component of the biosynthetic pathway of E-series resolvins (RvEs), converts eicosapentaenoate (EPA, C20:5(n-3)) primarily to 18S-HEPE that is further metabolized by ALOX5 and LTA4H to generate 18S-RvE1 and 18S-RvE2. In vascular endothelial cells, converts docosapentaenoate (DPA, C22:5(n-3)) to 13R-HDPA, a precursor for 13-series resolvins (RvTs) shown to activate macrophage phagocytosis during bacterial infection. In activated leukocytes, contributes to oxygenation of hydroxyeicosatetraenoates (HETE) to diHETES (5,15-diHETE and 5,11-diHETE). Can also use linoleate (LA, (9Z,12Z)-octadecadienoate, C18:2(n-6)) as substrate and produce hydroxyoctadecadienoates (HODEs) in a regio- and stereospecific manner, being (9R)-HODE ((9R)-hydroxy-(10E,12Z)-octadecadienoate) and (13S)-HODE ((13S)-hydroxy-(9Z,11E)-octadecadienoate) its major products. During neuroinflammation, plays a role in neuronal secretion of specialized preresolving mediators (SPMs) 15R-lipoxin A4 that regulates phagocytic microglia. The sequence is that of Prostaglandin G/H synthase 2 (PTGS2) from Cavia porcellus (Guinea pig).